The sequence spans 526 residues: Probable rhamnogalacturonase B (526 aa).

The N-terminal stretch at 1-20 (MHVNTLSVLSLVGLVPLAAA) is a signal peptide. Cys-41 and Cys-67 form a disulfide bridge. Asn-144 carries N-linked (GlcNAc...) asparagine glycosylation. Asp-218 serves as the catalytic Proton donor. An intrachain disulfide couples Cys-220 to Cys-237. N-linked (GlcNAc...) asparagine glycosylation is found at Asn-238 and Asn-253. The active site involves His-293. N-linked (GlcNAc...) asparagine glycosylation is present at Asn-320. 2 disulfides stabilise this stretch: Cys-343–Cys-349 and Cys-371–Cys-380.

It belongs to the glycosyl hydrolase 28 family.

It localises to the secreted. The catalysed reaction is Endohydrolysis of alpha-D-GalA-(1-&gt;2)-alpha-L-Rha glycosidic bond in the rhamnogalacturonan I backbone with initial inversion of anomeric configuration releasing oligosaccharides with beta-D-GalA at the reducing end.. Its function is as follows. Pectinolytic enzymes consist of four classes of enzymes: pectine lyase, polygalacturonase, pectin methylesterase and rhamnogalacturonase. Hydrolyzes alpha-D-galacturonopyranosyl-(1,2)-alpha-L-rhamnopyranosyl linkages in the backbone of the hairy regions of pectins. This Aspergillus terreus (strain NIH 2624 / FGSC A1156) protein is Probable rhamnogalacturonase B (rhgB).